Reading from the N-terminus, the 151-residue chain is Deoxyuridine 5'-triphosphate nucleotidohydrolase (151 aa).

Substrate contacts are provided by residues 70 to 72, Asn-83, 87 to 89, and Met-97; these read RSG and LID.

Belongs to the dUTPase family. Requires Mg(2+) as cofactor.

It catalyses the reaction dUTP + H2O = dUMP + diphosphate + H(+). Its pathway is pyrimidine metabolism; dUMP biosynthesis; dUMP from dCTP (dUTP route): step 2/2. Its function is as follows. This enzyme is involved in nucleotide metabolism: it produces dUMP, the immediate precursor of thymidine nucleotides and it decreases the intracellular concentration of dUTP so that uracil cannot be incorporated into DNA. This Yersinia pseudotuberculosis serotype O:1b (strain IP 31758) protein is Deoxyuridine 5'-triphosphate nucleotidohydrolase.